A 120-amino-acid chain; its full sequence is DNA-directed RNA polymerase II subunit rpb11 (120 aa).

It belongs to the archaeal Rpo11/eukaryotic RPB11/RPC19 RNA polymerase subunit family. In terms of assembly, component of the RNA polymerase II (Pol II) complex consisting of 12 subunits.

It localises to the nucleus. In terms of biological role, DNA-dependent RNA polymerase catalyzes the transcription of DNA into RNA using the four ribonucleoside triphosphates as substrates. Component of RNA polymerase II which synthesizes mRNA precursors and many functional non-coding RNAs. Pol II is the central component of the basal RNA polymerase II transcription machinery. It is composed of mobile elements that move relative to each other. RPB11 is part of the core element with the central large cleft. This is DNA-directed RNA polymerase II subunit rpb11 (polr2j) from Dictyostelium discoideum (Social amoeba).